The following is a 588-amino-acid chain: Aspartate--tRNA ligase (588 aa).

Glutamate 174 lines the L-aspartate pocket. The segment at glutamine 198–lysine 201 is aspartate. Arginine 220 is an L-aspartate binding site. Residues arginine 220–glutamate 222 and glutamine 229 contribute to the ATP site. Residue histidine 448 coordinates L-aspartate. Glutamate 482 contributes to the ATP binding site. Arginine 489 contacts L-aspartate. Residue glycine 534–arginine 537 coordinates ATP.

This sequence belongs to the class-II aminoacyl-tRNA synthetase family. Type 1 subfamily. Homodimer.

It is found in the cytoplasm. The catalysed reaction is tRNA(Asp) + L-aspartate + ATP = L-aspartyl-tRNA(Asp) + AMP + diphosphate. Catalyzes the attachment of L-aspartate to tRNA(Asp) in a two-step reaction: L-aspartate is first activated by ATP to form Asp-AMP and then transferred to the acceptor end of tRNA(Asp). The sequence is that of Aspartate--tRNA ligase from Xanthomonas euvesicatoria pv. vesicatoria (strain 85-10) (Xanthomonas campestris pv. vesicatoria).